Reading from the N-terminus, the 123-residue chain is MAEKKKSVSIKKGDTVKVIAGKDKGAEGRVIQVLREEQRVIVEGVNRVKRHTKVVNQGGRAGTTGGIITAEAPIHVSNVMLVEGGGVTRIGFRRDEVTKRRPDGSTYKAERSVRISRKTGKEI.

Residues 100 to 123 (RRPDGSTYKAERSVRISRKTGKEI) form a disordered region.

The protein belongs to the universal ribosomal protein uL24 family. In terms of assembly, part of the 50S ribosomal subunit.

Its function is as follows. One of two assembly initiator proteins, it binds directly to the 5'-end of the 23S rRNA, where it nucleates assembly of the 50S subunit. Functionally, one of the proteins that surrounds the polypeptide exit tunnel on the outside of the subunit. The chain is Large ribosomal subunit protein uL24 from Nocardioides sp. (strain ATCC BAA-499 / JS614).